The following is a 505-amino-acid chain: Deoxyguanosinetriphosphate triphosphohydrolase (505 aa).

The HD domain maps to 66–273; it reads RLTHSMEVQQ…MEAADDISYC (208 aa).

It belongs to the dGTPase family. Type 1 subfamily. Homotetramer. Mg(2+) is required as a cofactor.

The catalysed reaction is dGTP + H2O = 2'-deoxyguanosine + triphosphate + H(+). Functionally, dGTPase preferentially hydrolyzes dGTP over the other canonical NTPs. This is Deoxyguanosinetriphosphate triphosphohydrolase from Serratia proteamaculans (strain 568).